The sequence spans 305 residues: tRNA pseudouridine synthase B (305 aa).

Catalysis depends on D38, which acts as the Nucleophile.

Belongs to the pseudouridine synthase TruB family. Type 1 subfamily.

The catalysed reaction is uridine(55) in tRNA = pseudouridine(55) in tRNA. Functionally, responsible for synthesis of pseudouridine from uracil-55 in the psi GC loop of transfer RNAs. The sequence is that of tRNA pseudouridine synthase B from Latilactobacillus sakei subsp. sakei (strain 23K) (Lactobacillus sakei subsp. sakei).